A 54-amino-acid chain; its full sequence is MSPQTETKASVGFKAGVKDYKLTYYTPDYETKDTDILAAFRVTPQPGVPPEEAG.

The propeptide occupies 1–2 (MS). An N-acetylproline modification is found at Pro3. Lys14 carries the N6,N6,N6-trimethyllysine modification.

The protein belongs to the RuBisCO large chain family. Type I subfamily. As to quaternary structure, heterohexadecamer of 8 large chains and 8 small chains.

It is found in the plastid. It localises to the chloroplast. The catalysed reaction is 2 (2R)-3-phosphoglycerate + 2 H(+) = D-ribulose 1,5-bisphosphate + CO2 + H2O. The enzyme catalyses D-ribulose 1,5-bisphosphate + O2 = 2-phosphoglycolate + (2R)-3-phosphoglycerate + 2 H(+). RuBisCO catalyzes two reactions: the carboxylation of D-ribulose 1,5-bisphosphate, the primary event in carbon dioxide fixation, as well as the oxidative fragmentation of the pentose substrate in the photorespiration process. Both reactions occur simultaneously and in competition at the same active site. The chain is Ribulose bisphosphate carboxylase large chain (rbcL) from Icacina mannii.